The sequence spans 382 residues: Succinate--CoA ligase [ADP-forming] subunit beta (382 aa).

Positions 9 to 237 (KQVFADAGIP…AAEGDELEQK (229 aa)) constitute an ATP-grasp domain. ATP is bound by residues K45, 52–54 (GRG), E91, V94, and E99. Mg(2+)-binding residues include N191 and D205. Residues N257 and 314-316 (GIT) contribute to the substrate site.

It belongs to the succinate/malate CoA ligase beta subunit family. Heterotetramer of two alpha and two beta subunits. Mg(2+) is required as a cofactor.

It carries out the reaction succinate + ATP + CoA = succinyl-CoA + ADP + phosphate. The enzyme catalyses GTP + succinate + CoA = succinyl-CoA + GDP + phosphate. It participates in carbohydrate metabolism; tricarboxylic acid cycle; succinate from succinyl-CoA (ligase route): step 1/1. Succinyl-CoA synthetase functions in the citric acid cycle (TCA), coupling the hydrolysis of succinyl-CoA to the synthesis of either ATP or GTP and thus represents the only step of substrate-level phosphorylation in the TCA. The beta subunit provides nucleotide specificity of the enzyme and binds the substrate succinate, while the binding sites for coenzyme A and phosphate are found in the alpha subunit. The polypeptide is Succinate--CoA ligase [ADP-forming] subunit beta (Haloarcula marismortui (strain ATCC 43049 / DSM 3752 / JCM 8966 / VKM B-1809) (Halobacterium marismortui)).